Here is a 171-residue protein sequence, read N- to C-terminus: AP-3 complex subunit sigma (171 aa).

The protein belongs to the adaptor complexes small subunit family. Adaptor protein complex 3 (AP-3) is a heterotetramer composed of two large adaptins (delta-type subunit and beta-type subunit), a medium adaptin (mu-type subunit) and a small adaptin (sigma-type subunit).

The protein localises to the endosome membrane. Its function is as follows. Part of the AP-3 complex, an adaptor-related complex which is essential for the compartmentalization of the endocytic pathway. This chain is AP-3 complex subunit sigma (ap3s1), found in Dictyostelium discoideum (Social amoeba).